The chain runs to 281 residues: Bis(5'-nucleosyl)-tetraphosphatase, symmetrical (281 aa).

This sequence belongs to the Ap4A hydrolase family.

The catalysed reaction is P(1),P(4)-bis(5'-adenosyl) tetraphosphate + H2O = 2 ADP + 2 H(+). Hydrolyzes diadenosine 5',5'''-P1,P4-tetraphosphate to yield ADP. The protein is Bis(5'-nucleosyl)-tetraphosphatase, symmetrical of Pectobacterium atrosepticum (strain SCRI 1043 / ATCC BAA-672) (Erwinia carotovora subsp. atroseptica).